A 137-amino-acid polypeptide reads, in one-letter code: Actin-depolymerizing factor 2 (137 aa).

An ADF-H domain is found at 5–137 (ASGMAVHDDC…GLDVFKSRTN (133 aa)). Ser-6 is modified (phosphoserine).

This sequence belongs to the actin-binding proteins ADF family. Interacts with AIP1-1.

It localises to the cytoplasm. Its subcellular location is the cytoskeleton. Functionally, actin-depolymerizing protein. Severs actin filaments (F-actin) and binds to actin monomers. Required for normal cell growth, plant development, cell organ expansion and flowering. Essential for root-knot nematode infection. The sequence is that of Actin-depolymerizing factor 2 (ADF2) from Arabidopsis thaliana (Mouse-ear cress).